Consider the following 214-residue polypeptide: Large ribosomal subunit protein uL29m (214 aa).

It belongs to the universal ribosomal protein uL29 family. As to quaternary structure, component of the mitochondrial large ribosomal subunit. Mature mitochondrial ribosomes consist of a small (37S) and a large (54S) subunit. The 37S subunit contains at least 33 different proteins and 1 molecule of RNA (15S). The 54S subunit contains at least 45 different proteins and 1 molecule of RNA (21S).

The protein resides in the mitochondrion. In Aspergillus terreus (strain NIH 2624 / FGSC A1156), this protein is Large ribosomal subunit protein uL29m (mrpl4).